Here is a 318-residue protein sequence, read N- to C-terminus: Acetyl-coenzyme A carboxylase carboxyl transferase subunit beta (318 aa).

One can recognise a CoA carboxyltransferase N-terminal domain in the interval 25–294; it reads LWSKCSECGT…AVKGELPAPA (270 aa). The Zn(2+) site is built by Cys29, Cys32, Cys48, and Cys51. The segment at 29–51 adopts a C4-type zinc-finger fold; it reads CSECGTMLFHRELSDNLNVCTNC. The interval 286–318 is disordered; it reads VKGELPAPAPLESDAETALASDTDPNGAPPSKD.

Belongs to the AccD/PCCB family. In terms of assembly, acetyl-CoA carboxylase is a heterohexamer composed of biotin carboxyl carrier protein (AccB), biotin carboxylase (AccC) and two subunits each of ACCase subunit alpha (AccA) and ACCase subunit beta (AccD). Zn(2+) is required as a cofactor.

It is found in the cytoplasm. The enzyme catalyses N(6)-carboxybiotinyl-L-lysyl-[protein] + acetyl-CoA = N(6)-biotinyl-L-lysyl-[protein] + malonyl-CoA. It participates in lipid metabolism; malonyl-CoA biosynthesis; malonyl-CoA from acetyl-CoA: step 1/1. Component of the acetyl coenzyme A carboxylase (ACC) complex. Biotin carboxylase (BC) catalyzes the carboxylation of biotin on its carrier protein (BCCP) and then the CO(2) group is transferred by the transcarboxylase to acetyl-CoA to form malonyl-CoA. This chain is Acetyl-coenzyme A carboxylase carboxyl transferase subunit beta, found in Jannaschia sp. (strain CCS1).